Reading from the N-terminus, the 102-residue chain is Cytochrome b (102 aa).

Helical transmembrane passes span 1 to 21 (FGSLLGLCLATQILTGLFLAM), 45 to 66 (WLIRNIHANGASFFFICIYLHI), and 81 to 101 (WNIGVVLLLLVMMTAFVGYVL). Residues His-51 and His-65 each contribute to the heme b site.

This sequence belongs to the cytochrome b family. The cytochrome bc1 complex contains 3 respiratory subunits (MT-CYB, CYC1 and UQCRFS1), 2 core proteins (UQCRC1 and UQCRC2) and probably 6 low-molecular weight proteins. The cofactor is heme b.

It localises to the mitochondrion inner membrane. Its function is as follows. Component of the ubiquinol-cytochrome c reductase complex (complex III or cytochrome b-c1 complex) that is part of the mitochondrial respiratory chain. The b-c1 complex mediates electron transfer from ubiquinol to cytochrome c. Contributes to the generation of a proton gradient across the mitochondrial membrane that is then used for ATP synthesis. The chain is Cytochrome b (mt-cyb) from Megalops atlanticus (Tarpon).